A 388-amino-acid polypeptide reads, in one-letter code: Chorismate synthase (388 aa).

NADP(+) contacts are provided by Arg39 and Arg45. Residues 132-134 (RSS), 251-252 (NA), Gly296, 311-315 (KPIPT), and Arg337 contribute to the FMN site.

The protein belongs to the chorismate synthase family. Homotetramer. FMNH2 is required as a cofactor.

It carries out the reaction 5-O-(1-carboxyvinyl)-3-phosphoshikimate = chorismate + phosphate. It functions in the pathway metabolic intermediate biosynthesis; chorismate biosynthesis; chorismate from D-erythrose 4-phosphate and phosphoenolpyruvate: step 7/7. Catalyzes the anti-1,4-elimination of the C-3 phosphate and the C-6 proR hydrogen from 5-enolpyruvylshikimate-3-phosphate (EPSP) to yield chorismate, which is the branch point compound that serves as the starting substrate for the three terminal pathways of aromatic amino acid biosynthesis. This reaction introduces a second double bond into the aromatic ring system. The sequence is that of Chorismate synthase from Staphylococcus aureus (strain MRSA252).